Consider the following 176-residue polypeptide: Ubiquinol-cytochrome c reductase iron-sulfur subunit (176 aa).

The chain crosses the membrane as a helical span at residues F15–I36. One can recognise a Rieske domain in the interval A87–Q174. Residues C119, H121, C138, and H141 each coordinate [2Fe-2S] cluster. An intrachain disulfide couples C124 to C140.

It belongs to the Rieske iron-sulfur protein family. As to quaternary structure, the main subunits of complex b-c1 are: cytochrome b, cytochrome c1 and the Rieske protein. It depends on [2Fe-2S] cluster as a cofactor.

The protein localises to the cell membrane. It carries out the reaction a quinol + 2 Fe(III)-[cytochrome c](out) = a quinone + 2 Fe(II)-[cytochrome c](out) + 2 H(+)(out). Its function is as follows. Component of the ubiquinol-cytochrome c reductase complex (complex III or cytochrome b-c1 complex), which is a respiratory chain that generates an electrochemical potential coupled to ATP synthesis. The protein is Ubiquinol-cytochrome c reductase iron-sulfur subunit (petA) of Bradyrhizobium diazoefficiens (strain JCM 10833 / BCRC 13528 / IAM 13628 / NBRC 14792 / USDA 110).